The sequence spans 132 residues: Protein NrdI (132 aa).

Belongs to the NrdI family.

Its function is as follows. Probably involved in ribonucleotide reductase function. The chain is Protein NrdI from Agrobacterium fabrum (strain C58 / ATCC 33970) (Agrobacterium tumefaciens (strain C58)).